A 190-amino-acid chain; its full sequence is Peptidyl-tRNA hydrolase (190 aa).

A tRNA-binding site is contributed by Tyr-14. His-19 serves as the catalytic Proton acceptor. The tRNA site is built by Tyr-64, Asn-66, and Asn-113.

This sequence belongs to the PTH family. As to quaternary structure, monomer.

Its subcellular location is the cytoplasm. The catalysed reaction is an N-acyl-L-alpha-aminoacyl-tRNA + H2O = an N-acyl-L-amino acid + a tRNA + H(+). Functionally, hydrolyzes ribosome-free peptidyl-tRNAs (with 1 or more amino acids incorporated), which drop off the ribosome during protein synthesis, or as a result of ribosome stalling. Its function is as follows. Catalyzes the release of premature peptidyl moieties from peptidyl-tRNA molecules trapped in stalled 50S ribosomal subunits, and thus maintains levels of free tRNAs and 50S ribosomes. The protein is Peptidyl-tRNA hydrolase of Gemmatimonas aurantiaca (strain DSM 14586 / JCM 11422 / NBRC 100505 / T-27).